The chain runs to 892 residues: Putative leucine-rich repeat receptor-like serine/threonine-protein kinase At2g04300 (892 aa).

An N-terminal signal peptide occupies residues 1–26; sequence MKTHPQAILLCVLFFITFGLLHVVEA. Residues 27–523 lie on the Extracellular side of the membrane; that stretch reads GNQEGFISLD…GAKKKNVVVL (497 aa). N-linked (GlcNAc...) asparagine glycans are attached at residues N99, N186, N241, N267, and N294. LRR repeat units follow at residues 375–396, 399–422, 423–444, and 447–467; these read IKNI…PCVP, FMWD…FLNL, SSSH…LQNL, and SNNN…SLLV. Residues N407, N421, N437, N450, and N469 are each glycosylated (N-linked (GlcNAc...) asparagine). A helical transmembrane segment spans residues 524-544; the sequence is VVVSIALVVVLGSALALFLVF. Over 545–892 the chain is Cytoplasmic; that stretch reads RKRKTPRNEV…FGTEYTPEAR (348 aa). T573 is subject to Phosphothreonine. Residues 582-855 form the Protein kinase domain; the sequence is NNFEKILGKG…QVVIELNECL (274 aa). ATP-binding positions include 588–596 and K610; that span reads LGKGGFGMV. Position 655 is a phosphotyrosine (Y655). D707 (proton acceptor) is an active-site residue. 2 positions are modified to phosphothreonine: T742 and T747. Y755 bears the Phosphotyrosine mark.

This sequence belongs to the protein kinase superfamily. Ser/Thr protein kinase family.

It is found in the cell membrane. It catalyses the reaction L-seryl-[protein] + ATP = O-phospho-L-seryl-[protein] + ADP + H(+). The enzyme catalyses L-threonyl-[protein] + ATP = O-phospho-L-threonyl-[protein] + ADP + H(+). This Arabidopsis thaliana (Mouse-ear cress) protein is Putative leucine-rich repeat receptor-like serine/threonine-protein kinase At2g04300.